A 163-amino-acid chain; its full sequence is Endoribonuclease YbeY (163 aa).

Zn(2+)-binding residues include histidine 126, histidine 130, and histidine 136.

The protein belongs to the endoribonuclease YbeY family. It depends on Zn(2+) as a cofactor.

Its subcellular location is the cytoplasm. Functionally, single strand-specific metallo-endoribonuclease involved in late-stage 70S ribosome quality control and in maturation of the 3' terminus of the 16S rRNA. The protein is Endoribonuclease YbeY of Chelativorans sp. (strain BNC1).